The primary structure comprises 435 residues: Cyclic GMP-AMP synthase-like receptor (435 aa).

ATP contacts are provided by residues Ser-70 and 82–84 (EFD). Mg(2+) contacts are provided by Glu-82, Asp-84, and Asp-209. Position 209 (Asp-209) interacts with GTP. ATP-binding positions include Lys-286 and 300-304 (SYYVK). Mn(2+) contacts are provided by Leu-311, Asp-312, and Asp-317.

This sequence belongs to the mab-21 family. Requires Mg(2+) as cofactor. Mn(2+) is required as a cofactor.

The catalysed reaction is GTP + ATP = 2',3'-cGAMP + 2 diphosphate. It carries out the reaction GTP + ATP = pppGp(2'-5')A + diphosphate. It catalyses the reaction pppGp(2'-5')A = 2',3'-cGAMP + diphosphate. In terms of biological role, nucleotidyltransferase that catalyzes the formation of cyclic GMP-AMP (2',3'-cGAMP) from ATP and GTP and plays a key role in innate immunity. Directly binds some unknown ligand, activating the nucleotidyltransferase activity, leading to synthesis of 2',3'-cGAMP, a second messenger that binds to and activates Sting, thereby triggering the immune response via activation of the NF-kappa-B transcription factor. The polypeptide is Cyclic GMP-AMP synthase-like receptor (Ctenocephalides felis (Cat flea)).